The primary structure comprises 44 residues: U4-ctenitoxin-Pk1a (44 aa).

Intrachain disulfides connect Cys-4-Cys-18, Cys-11-Cys-24, Cys-15-Cys-42, Cys-17-Cys-33, and Cys-26-Cys-31.

Expressed by the venom gland.

The protein localises to the secreted. Its function is as follows. Neurotoxin. Causes spastic paralysis and death in mice within 10 minutes at dose levels of 3 ug per mouse. The polypeptide is U4-ctenitoxin-Pk1a (Phoneutria keyserlingi (Brazilian wandering spider)).